The sequence spans 463 residues: L-seryl-tRNA(Sec) selenium transferase (463 aa).

Lys295 is modified (N6-(pyridoxal phosphate)lysine).

Belongs to the SelA family. In terms of assembly, homodecamer; pentamer of dimers. Binds only one seryl-tRNA(Sec) per dimer. The cofactor is pyridoxal 5'-phosphate.

Its subcellular location is the cytoplasm. The catalysed reaction is L-seryl-tRNA(Sec) + selenophosphate + H(+) = L-selenocysteinyl-tRNA(Sec) + phosphate. It participates in aminoacyl-tRNA biosynthesis; selenocysteinyl-tRNA(Sec) biosynthesis; selenocysteinyl-tRNA(Sec) from L-seryl-tRNA(Sec) (bacterial route): step 1/1. Functionally, converts seryl-tRNA(Sec) to selenocysteinyl-tRNA(Sec) required for selenoprotein biosynthesis. This Salmonella paratyphi B (strain ATCC BAA-1250 / SPB7) protein is L-seryl-tRNA(Sec) selenium transferase.